The primary structure comprises 275 residues: MTSSASSPQDLEKGVNTLENIETLPQQGSIAGVSQGFPNIQEIYSDRDFITLGSSTYRRRDLLNALDRGDGEEGNCAKYTPHQFANPVPLGLASFSLSCLVLSLINANVRGVTDGKWALSLFMFFGGAIELFAGLLCFVIGDTYAMTVFSSFGGFWICYGYGLTDTDNLVSGYTDPTMLNNVIGFFLAGWTVFTFLMLMCTLKSTWGLFLLLTFLDLTFLLLCIGTFIDNNNLKMAGGYFGILSSCCGWYSLYCSVVSPSNSYLAFRAHTMPNAP.

Residues 1 to 84 (MTSSASSPQD…NCAKYTPHQF (84 aa)) lie on the Extracellular side of the membrane. Residue serine 4 is modified to Phosphoserine. The chain crosses the membrane as a helical span at residues 85 to 105 (ANPVPLGLASFSLSCLVLSLI). Residues 106–120 (NANVRGVTDGKWALS) are Cytoplasmic-facing. A helical membrane pass occupies residues 121-141 (LFMFFGGAIELFAGLLCFVIG). Residues 142–181 (DTYAMTVFSSFGGFWICYGYGLTDTDNLVSGYTDPTMLNN) are Extracellular-facing. A helical transmembrane segment spans residues 182–202 (VIGFFLAGWTVFTFLMLMCTL). Over 203 to 207 (KSTWG) the chain is Cytoplasmic. Residues 208–228 (LFLLLTFLDLTFLLLCIGTFI) traverse the membrane as a helical segment. The Extracellular portion of the chain corresponds to 229–236 (DNNNLKMA). The helical transmembrane segment at 237–257 (GGYFGILSSCCGWYSLYCSVV) threads the bilayer. Topologically, residues 258–275 (SPSNSYLAFRAHTMPNAP) are cytoplasmic.

The protein belongs to the acetate uptake transporter (AceTr) (TC 2.A.96) family.

It is found in the cell membrane. Transporter protein required for ammonia export. Induced in rho(0) cells, probably to eliminate the excess ammonia that arises because of a potential defect in ammonia assimilation in those cells. The chain is Ammonia transport outward protein 3 (ATO3) from Saccharomyces cerevisiae (strain ATCC 204508 / S288c) (Baker's yeast).